Here is a 352-residue protein sequence, read N- to C-terminus: Rhodopsin, freshwater form (352 aa).

The Extracellular segment spans residues 1–36 (MNGTEGPNFYVPMSNVTGVVRSPFEYPQYYLAEPWA). Residues Asn2 and Asn15 are each glycosylated (N-linked (GlcNAc...) asparagine). A helical membrane pass occupies residues 37-61 (YSALAAYMFFLIIAGFPINFLTLYV). Residues 62 to 73 (TIEHKKLRTPLN) lie on the Cytoplasmic side of the membrane. A helical membrane pass occupies residues 74 to 98 (YILLNLAVADLFMVFGGFTTTMYTS). The Extracellular portion of the chain corresponds to 99 to 113 (MHGYFVFGPTGCNIE). Cys110 and Cys187 form a disulfide bridge. A helical membrane pass occupies residues 114-133 (GFFATLGGEIALWCLVVLAV). At 134 to 152 (ERWMVVCKPMSNFRFGENH) the chain is on the cytoplasmic side. A helical membrane pass occupies residues 153–176 (AIMGVAFTWVMALACAAPPLFGWS). Topologically, residues 177-202 (RYIPEGMQCSCGMDHYAPNPETYNES) are extracellular. N-linked (GlcNAc...) asparagine glycosylation occurs at Asn200. The helical transmembrane segment at 203-230 (FVIYMFICHFTIPLTVISFCYGRLVCTV) threads the bilayer. At 231–252 (KEATAQQQESETTQRAEREVTR) the chain is on the cytoplasmic side. Residues 253–276 (MVIIMVISFLVCWVPYASVAWYIF) traverse the membrane as a helical segment. Residues 277–284 (THQGSSFG) are Extracellular-facing. Residues 285 to 309 (PIFMTIPAFFAKSSSLYNPLIYICM) traverse the membrane as a helical segment. Lys296 carries the post-translational modification N6-(retinylidene)lysine. The Cytoplasmic segment spans residues 310-352 (NKQSRNCMITTLCCGKNPFEEEEGASTTASKTEASSVSSVSPA). Residue Cys323 is the site of S-palmitoyl cysteine attachment. The interval 330–352 (EEEGASTTASKTEASSVSSVSPA) is disordered. Low complexity predominate over residues 334 to 352 (ASTTASKTEASSVSSVSPA).

The protein belongs to the G-protein coupled receptor 1 family. Opsin subfamily. In terms of processing, phosphorylated on some or all of the serine and threonine residues present in the C-terminal region. As to expression, rod shaped photoreceptor cells which mediates vision in dim light.

It is found in the membrane. In terms of biological role, visual pigments such as rhodopsin and porphyropsin are light-absorbing molecules that mediate vision. Rhodopsin consists of an apoprotein, opsin, covalently linked to 11-cis-retinal. This receptor is coupled to the activation of phospholipase C. Porphyropsin consists of opsin covalently linked to 11-cis 3,4-didehydroretinal. The protein is Rhodopsin, freshwater form of Anguilla anguilla (European freshwater eel).